A 624-amino-acid polypeptide reads, in one-letter code: Threonine--tRNA ligase (624 aa).

The interval 1–143 is editing domain; that stretch reads MRLLFIHADE…SRTVTPEAAE (143 aa). Residues 197-499 are catalytic; the sequence is AHVKLMREKE…EQEGKLPTLP (303 aa). Zn(2+) contacts are provided by Cys289, His340, and His467. The interval 598-624 is disordered; sequence LERETEGKPRVPLTIPDRLSRRPRFGR.

The protein belongs to the class-II aminoacyl-tRNA synthetase family. Homodimer. Requires Zn(2+) as cofactor.

It localises to the cytoplasm. It carries out the reaction tRNA(Thr) + L-threonine + ATP = L-threonyl-tRNA(Thr) + AMP + diphosphate + H(+). In terms of biological role, catalyzes the attachment of threonine to tRNA(Thr) in a two-step reaction: L-threonine is first activated by ATP to form Thr-AMP and then transferred to the acceptor end of tRNA(Thr). Also edits incorrectly charged L-seryl-tRNA(Thr). This Methanopyrus kandleri (strain AV19 / DSM 6324 / JCM 9639 / NBRC 100938) protein is Threonine--tRNA ligase.